A 430-amino-acid chain; its full sequence is Purine nucleoside phosphorylase LACC1 (430 aa).

Lys-247 bears the N6-acetyllysine mark. Zn(2+) is bound by residues His-250, Cys-284, and His-301.

It belongs to the purine nucleoside phosphorylase YfiH/LACC1 family. Interacts with FASN. Interacts with SDHA. Interacts with ATF6, EIF2AK3 and ERN1. Post-translationally, phosphorylated on tyrosine residues. Ubiquitously expressed, with higher expression levels in immune-related tissues such as lymph nodes and spleen. Expressed in both intestinal and peripheral myeloid-derived cells.

The protein localises to the cytoplasm. It is found in the nucleus. It localises to the endoplasmic reticulum. The protein resides in the peroxisome. The catalysed reaction is adenosine + phosphate = alpha-D-ribose 1-phosphate + adenine. It catalyses the reaction inosine + phosphate = alpha-D-ribose 1-phosphate + hypoxanthine. It carries out the reaction guanosine + phosphate = alpha-D-ribose 1-phosphate + guanine. The enzyme catalyses S-methyl-5'-thioadenosine + phosphate = 5-(methylsulfanyl)-alpha-D-ribose 1-phosphate + adenine. The catalysed reaction is adenosine + H2O + H(+) = inosine + NH4(+). Functionally, purine nucleoside enzyme that catalyzes the phosphorolysis of adenosine, guanosine and inosine nucleosides, yielding D-ribose 1-phosphate and the respective free bases, adenine, guanine and hypoxanthine. Also catalyzes the phosphorolysis of S-methyl-5'-thioadenosine into adenine and S-methyl-5-thio-alpha-D-ribose 1-phosphate. Also has adenosine deaminase activity. Acts as a regulator of innate immunity in macrophages by modulating the purine nucleotide metabolism, thereby regulating the metabolic function and bioenergetic state of macrophages. Enables a purine nucleotide cycle between adenosine and inosine monophosphate and adenylosuccinate that prevents cytoplasmic acidification and balances the cytoplasmic-mitochondrial redox interface. The purine nucleotide cycle consumes aspartate and releases fumarate in a manner involving fatty acid oxidation and ATP-citrate lyase activity. Participates in pattern recognition receptor (PRR)-induced cytokines in macrophages: associates with the NOD2-signaling complex and promotes optimal NOD2-induced signaling, cytokine secretion and bacterial clearance. Localizes to the endoplasmic reticulum upon PRR stimulation of macrophages and associates with endoplasmic reticulum-stress sensors, promoting the endoplasmic reticulum unfolded protein response (UPR). Does not show laccase activity. This is Purine nucleoside phosphorylase LACC1 from Homo sapiens (Human).